A 149-amino-acid chain; its full sequence is D-aminoacyl-tRNA deacylase (149 aa).

Positions 137–138 (GP) match the Gly-cisPro motif, important for rejection of L-amino acids motif.

This sequence belongs to the DTD family. Homodimer.

It localises to the cytoplasm. It carries out the reaction glycyl-tRNA(Ala) + H2O = tRNA(Ala) + glycine + H(+). The enzyme catalyses a D-aminoacyl-tRNA + H2O = a tRNA + a D-alpha-amino acid + H(+). In terms of biological role, an aminoacyl-tRNA editing enzyme that deacylates mischarged D-aminoacyl-tRNAs. Also deacylates mischarged glycyl-tRNA(Ala), protecting cells against glycine mischarging by AlaRS. Acts via tRNA-based rather than protein-based catalysis; rejects L-amino acids rather than detecting D-amino acids in the active site. By recycling D-aminoacyl-tRNA to D-amino acids and free tRNA molecules, this enzyme counteracts the toxicity associated with the formation of D-aminoacyl-tRNA entities in vivo and helps enforce protein L-homochirality. The polypeptide is D-aminoacyl-tRNA deacylase (Caldicellulosiruptor saccharolyticus (strain ATCC 43494 / DSM 8903 / Tp8T 6331)).